The following is a 582-amino-acid chain: Zinc finger protein somi-1 (582 aa).

Disordered regions lie at residues 179–251 (LRPE…NNTD) and 352–377 (SAEP…KKEQ). Over residues 188-226 (TQKSTNGVHRSTSNSSAETLRNNSVSAATVSPSDDNSLN) the composition is skewed to polar residues. Low complexity predominate over residues 227–244 (SPALTSSGSAGSGTPPLG). A compositionally biased stretch (basic and acidic residues) spans 352 to 368 (SAEPMKRHRVEAHEKQS). The C2H2-type; Degenerate zinc-finger motif lies at 454–477 (YICEDCDFVTVYKGNMKRHLNTCH). The tract at residues 513 to 582 (AHKANSSRGR…PPPPPPPMLL (70 aa)) is disordered. Residues 551–570 (LLESLASSSSSMGGYSNGNN) show a composition bias toward low complexity. Positions 572-582 (QPPPPPPPMLL) are enriched in pro residues.

May interact with swsn-9; the interaction promotes hypodermal differentiation. Expressed in hypodermal seam cells, the somatic gonad and vulval precursor cells, body wall muscle and head neurons.

It is found in the nucleus. Its function is as follows. DNA-binding protein which binds to the promoters of let-60, lin-14 and lin-28, possibly to regulate genes involved in hypodermal and vulval development. Together with miRNAs mir-84 and let-7 may direct terminal differentiation of the seam cells, exit from the molting cycle, and vulva formation. Does not regulate the expression of mir-84. May promote hypodermal differentiation in association with swsn-9, a component of SWI/SNF chromatin remodeling complexes. This is Zinc finger protein somi-1 from Caenorhabditis elegans.